We begin with the raw amino-acid sequence, 156 residues long: Endogenous retrovirus group K member 18 Pro protein (156 aa).

Residues 21-96 (LEGLVDTGAD…IPLNLWGRDL (76 aa)) form the Peptidase A2 domain. The active site involves D26. The 46-residue stretch at 111-156 (YSPMSQKIMTKMGYIPGKGLGKNEDGIKVPIEAKINHGREGTGYPF) folds into the G-patch domain.

This sequence belongs to the peptidase A2 family. HERV class-II K(HML-2) subfamily. In terms of assembly, active as a homodimer. Autoproteolytically processed at the N-terminus. Expected C-terminal autoprocessing not detected. The sequence shown is that of the processed Pro protein.

It catalyses the reaction Processing at the authentic HIV-1 PR recognition site and release of the mature p17 matrix and the p24 capsid protein, as a result of the cleavage of the -SQNY-|-PIVQ- cleavage site.. Retroviral proteases have roles in the processing of the primary translation products and the maturation of the viral particle. Endogenous Pro proteins may have kept, lost or modified their original function during evolution. This is Endogenous retrovirus group K member 18 Pro protein (ERVK-18) from Homo sapiens (Human).